The primary structure comprises 146 residues: MSCCKMEAPYPHAESDEKRIVFALDPKGDDAERDQYRLQLIPGRVLEMSRNDAANHQTLSGSIEQHTVEGWGAPFFHVKLAKEAAATLMQVHSEDHVEKSRKFVALSNTPLVPYTSRYPVVVYLPKDAELRYSIWCGGEQMQATTE.

It belongs to the protease inhibitor I11 (ecotin) family.

This is Ecotin-like protein 1 (ISP1) from Leishmania braziliensis.